A 246-amino-acid chain; its full sequence is Probable transcriptional regulatory protein WP1214 (246 aa).

A disordered region spans residues 1-22 (MAGHSQFSNIKHRKGAQDAKRS).

This sequence belongs to the TACO1 family.

Its subcellular location is the cytoplasm. The protein is Probable transcriptional regulatory protein WP1214 of Wolbachia pipientis subsp. Culex pipiens (strain wPip).